The chain runs to 297 residues: Phosphate import ATP-binding protein PstB (297 aa).

In terms of domain architecture, ABC transporter spans 50-292 (MRLRDVEVFY…PEHDLTEAYI (243 aa)). 82–89 (GPSGCGKS) contributes to the ATP binding site.

Belongs to the ABC transporter superfamily. Phosphate importer (TC 3.A.1.7) family. The complex is composed of two ATP-binding proteins (PstB), two transmembrane proteins (PstC and PstA) and a solute-binding protein (PstS).

The protein resides in the cell inner membrane. It carries out the reaction phosphate(out) + ATP + H2O = ADP + 2 phosphate(in) + H(+). Part of the ABC transporter complex PstSACB involved in phosphate import. Responsible for energy coupling to the transport system. The polypeptide is Phosphate import ATP-binding protein PstB (Alcanivorax borkumensis (strain ATCC 700651 / DSM 11573 / NCIMB 13689 / SK2)).